The primary structure comprises 472 residues: Ribosomal protein uS12 methylthiotransferase RimO (472 aa).

Positions 33-143 constitute an MTTase N-terminal domain; it reads NRIGFVSLGC…VLKHVHKYVP (111 aa). [4Fe-4S] cluster is bound by residues Cys42, Cys78, Cys107, Cys175, Cys179, and Cys182. The Radical SAM core domain maps to 161-398; the sequence is LTPKHYAYLK…MELQAEISAE (238 aa). Residues 401-467 form the TRAM domain; the sequence is ARFVGRTLDI…EHDLWAEVVD (67 aa).

This sequence belongs to the methylthiotransferase family. RimO subfamily. It depends on [4Fe-4S] cluster as a cofactor.

Its subcellular location is the cytoplasm. It catalyses the reaction L-aspartate(89)-[ribosomal protein uS12]-hydrogen + (sulfur carrier)-SH + AH2 + 2 S-adenosyl-L-methionine = 3-methylsulfanyl-L-aspartate(89)-[ribosomal protein uS12]-hydrogen + (sulfur carrier)-H + 5'-deoxyadenosine + L-methionine + A + S-adenosyl-L-homocysteine + 2 H(+). Functionally, catalyzes the methylthiolation of an aspartic acid residue of ribosomal protein uS12. The chain is Ribosomal protein uS12 methylthiotransferase RimO from Shewanella putrefaciens (strain CN-32 / ATCC BAA-453).